Here is a 185-residue protein sequence, read N- to C-terminus: Sarcoplasmic calcium-binding proteins I, III, and IV (185 aa).

4 EF-hand domains span residues 5–41, 57–92, 102–137, and 138–173; these read FQKQ…YKEV, SLED…TIAT, WCQN…FQLQ, and CADV…TSPA. Residues Asp19, Asn21, Asp23, Ser25, Asp30, Asp70, Asn72, Asp74, Glu81, Asp115, Ser117, Asp119, and Glu126 each coordinate Ca(2+).

Its function is as follows. Like parvalbumins, SCPs seem to be more abundant in fast contracting muscles, but no functional relationship can be established from this distribution. The chain is Sarcoplasmic calcium-binding proteins I, III, and IV from Branchiostoma lanceolatum (Common lancelet).